A 115-amino-acid polypeptide reads, in one-letter code: NAD(P)H-quinone oxidoreductase subunit M (115 aa).

This sequence belongs to the complex I NdhM subunit family. As to quaternary structure, NDH-1 can be composed of about 15 different subunits; different subcomplexes with different compositions have been identified which probably have different functions.

The protein localises to the cellular thylakoid membrane. It catalyses the reaction a plastoquinone + NADH + (n+1) H(+)(in) = a plastoquinol + NAD(+) + n H(+)(out). It carries out the reaction a plastoquinone + NADPH + (n+1) H(+)(in) = a plastoquinol + NADP(+) + n H(+)(out). Functionally, NDH-1 shuttles electrons from an unknown electron donor, via FMN and iron-sulfur (Fe-S) centers, to quinones in the respiratory and/or the photosynthetic chain. The immediate electron acceptor for the enzyme in this species is believed to be plastoquinone. Couples the redox reaction to proton translocation, and thus conserves the redox energy in a proton gradient. Cyanobacterial NDH-1 also plays a role in inorganic carbon-concentration. This chain is NAD(P)H-quinone oxidoreductase subunit M, found in Prochlorococcus marinus (strain MIT 9301).